A 703-amino-acid chain; its full sequence is Protein CNGC15c (703 aa).

A compositionally biased stretch (basic and acidic residues) spans 1 to 10 (MGFDNPRSER). The disordered stretch occupies residues 1–23 (MGFDNPRSERFEDDPEISKIPTT). A run of 5 helical transmembrane segments spans residues 91–111 (IFLV…YLPV), 179–199 (GFWL…WIII), 216–236 (FFII…SSQI), 255–275 (LMLY…LSIE), and 372–392 (FIGE…LFAL). 480–565 (LFDQMDERML…WALDPRPSVI (86 aa)) is an a nucleoside 3',5'-cyclic phosphate binding site. Residues 616–644 (RTWAACFIQAAWRRHKKRKEAAELRAKEN) enclose the IQ domain. Residues 676–703 (KGVNMHSGTNSGVVSSLQKPTEPDFSDE) are disordered. Residues 681 to 694 (HSGTNSGVVSSLQK) are compositionally biased toward polar residues.

The protein belongs to the cyclic nucleotide-gated cation channel (TC 1.A.1.5) family. Interacts (via N-terminus) with DMI1 (via c-terminus). The Nod factor has no effect on this interaction, implying that the complex is maintained after activation. Expressed in roots, stems, leaves, flowers and pods.

The protein localises to the nucleus membrane. Its function is as follows. Cyclic nucleotide-gated channel involved in the establishment of both rhizobial and mycorrhizal associations. Required for full activation of nuclear-localized Ca(2+) oscillations by Nod and Myc factors. Simultaneous activation of the K(+)-permeable channel DMI1 and the Ca(2+) channel CNGC15 can give rise to sustained Ca(2+) oscillations. May function during fertilization in both female and male gametophytic Ca(2+) signaling. The protein is Protein CNGC15c of Medicago truncatula (Barrel medic).